The following is a 385-amino-acid chain: Aldehyde dehydrogenase family 3 member B2 (385 aa).

107 to 112 (GSPRVG) is a binding site for NAD(+). Residues glutamate 129 and cysteine 163 contribute to the active site. A Cysteine methyl ester modification is found at cysteine 382. Cysteine 382 carries the S-geranylgeranyl cysteine lipid modification. Residues 383 to 385 (TLL) constitute a propeptide, removed in mature form.

The protein belongs to the aldehyde dehydrogenase family. Post-translationally, geranylgeranylation is important for localization to lipid droplets and enzyme activity. Salivary gland. Expressed at protein level in placenta.

The protein localises to the lipid droplet. It carries out the reaction an aldehyde + NAD(+) + H2O = a carboxylate + NADH + 2 H(+). The catalysed reaction is a long-chain fatty aldehyde + NAD(+) + H2O = a long-chain fatty acid + NADH + 2 H(+). The enzyme catalyses a medium-chain fatty aldehyde + NAD(+) + H2O = a medium-chain fatty acid + NADH + 2 H(+). It catalyses the reaction hexadecanoate + NADH + 2 H(+) = hexadecanal + NAD(+) + H2O. It carries out the reaction octanal + NAD(+) + H2O = octanoate + NADH + 2 H(+). It functions in the pathway alcohol metabolism; ethanol degradation; acetate from ethanol: step 2/2. Functionally, oxidizes medium and long chain fatty aldehydes in lipid droplets into non-toxic fatty acids. The polypeptide is Aldehyde dehydrogenase family 3 member B2 (ALDH3B2) (Homo sapiens (Human)).